Consider the following 514-residue polypeptide: Glutathione-binding protein GsiB (514 aa).

The signal sequence occupies residues 1–27; the sequence is MSVMTIQRRWLVAAGVTAAMVASPVWA.

The protein belongs to the bacterial solute-binding protein 5 family. In terms of assembly, the complex is composed of two ATP-binding proteins (GsiA), two transmembrane proteins (GsiC and GsiD) and a solute-binding protein (GsiB).

It is found in the periplasm. Its function is as follows. Part of the ABC transporter complex GsiABCD involved in glutathione import. Binds glutathione. This chain is Glutathione-binding protein GsiB, found in Pectobacterium atrosepticum (strain SCRI 1043 / ATCC BAA-672) (Erwinia carotovora subsp. atroseptica).